We begin with the raw amino-acid sequence, 129 residues long: Small ribosomal subunit protein uS11 (129 aa).

It belongs to the universal ribosomal protein uS11 family. In terms of assembly, part of the 30S ribosomal subunit. Interacts with proteins S7 and S18. Binds to IF-3.

In terms of biological role, located on the platform of the 30S subunit, it bridges several disparate RNA helices of the 16S rRNA. Forms part of the Shine-Dalgarno cleft in the 70S ribosome. In Hahella chejuensis (strain KCTC 2396), this protein is Small ribosomal subunit protein uS11.